The following is an 88-amino-acid chain: Small ribosomal subunit protein uS15 (88 aa).

It belongs to the universal ribosomal protein uS15 family. Part of the 30S ribosomal subunit. Forms a bridge to the 50S subunit in the 70S ribosome, contacting the 23S rRNA.

One of the primary rRNA binding proteins, it binds directly to 16S rRNA where it helps nucleate assembly of the platform of the 30S subunit by binding and bridging several RNA helices of the 16S rRNA. Functionally, forms an intersubunit bridge (bridge B4) with the 23S rRNA of the 50S subunit in the ribosome. The chain is Small ribosomal subunit protein uS15 from Syntrophus aciditrophicus (strain SB).